The primary structure comprises 1245 residues: MDSIVNVVEDDVKYAQRVTSFSSPQNANVKVFTIPRHSFTAFRLSYVSPTELSACSQVTLLGGIPKQWYADQNNQVWKLLTKISLRKVRKQSDMLRRYGYGTIYKKRVGKIPTALYLRKHFTWSYEDNTSIHNGHRLKEAEMEMKRTRSSPVQKSEYKLSLPRRCRSSSDQNFMRQELLKEKKSELSRNNSLPLIDTAQAVDIHPVLHEEDQENTNKRNKSLLSNLKRKDLGESKSISRKDYSHFDRIPSPSSARSVGETDFNYNREPSEDTLRYPDSIIEVTNRTSPAPNSILSRSGQFVNSNDLSDGFSTSNTINNVGLNANEKIFFNALQSMEKENLMLWKTSQKYGTYLDERRKSADAFQKRERGSCVDIGKLHSSHLPFINILPPWPTELTEEERIIHDRLASKHSHHIRKHVHNARNKTSCKIKDSVGTFLGMTNSLTNKATVKKRTGQILKKEKMLVMVKEAIQNKVPLPNFSENECFDTRVSERWKEYIVIARSTGRFDPPILLQFYRHRHIPEIEDISSIATKYHRNPLDFFLSRNCIVKFYSSLDKTISIQKPDKRLGGFIDESIEKKDELKHYSPIKIFILRCSSIRSSGRWYKFLLESLDRQLFTPAINLKIPLTEISIKINLNEIIFQKLIDLGKQEKDRLKICFLQRGYKIFQHPILRYFTVAILEKLKLAHYDYLIRKWDTENPVLGCALKRYDRLEWIPCDEDSLVTGIFAFCQSHLIQYRPIANRLRETKSLEGKCLKEPTPIEGFLIRLTDKYGSARTNFGKYSISTAYFFTCENLLFSMKAYRANPPLPIDSMIDDTSTEIEKEEIWKQWKKIPEVYEQQPYPLDTNDHIEWMNCQTTQSEYDSRDFYAFHCFHRRIDQILKTDNVIDLTEVKDIYQGTRTDYEADKIKYGVYKEASEIFWHRNYEIDDVSRSVINIETSNGLLLKLLATSATVAEEWVIKLKQMISYWKNKQREDTERLLKIRRSNAGLLMLNGEEETKIGENTLRWIVEHGRADEQTFNANGISLSRPLIQKGPLYQKPHKHSVFSKYYVVLISGFIVLFHCFHRSTTGFAKEVLEYAHYVTIPIDDCYLYSGTTTELDLLQRDRTFDEINYGSHALPRVYGDGWRSVEDESSRCFTLWFGTRRALSSNRLQKKGNEKQYTQDYGRQDNNIDPPSAPEADLNNSNVPSNTDKIHFTKKLGVSGKSMVFMARSRQERDLWVMSIYYELERLRRTASTSNSRNQTM.

Positions 207 to 270 (LHEEDQENTN…DFNYNREPSE (64 aa)) are disordered. The span at 227–247 (KRKDLGESKSISRKDYSHFDR) shows a compositional bias: basic and acidic residues. The PxP motif lies at 385-399 (INILPPWPTELTEEE). The PH domain maps to 1030–1229 (LIQKGPLYQK…WVMSIYYELE (200 aa)). A disordered region spans residues 1154–1192 (KKGNEKQYTQDYGRQDNNIDPPSAPEADLNNSNVPSNTD). Polar residues-rich tracts occupy residues 1159–1173 (KQYT…NNID) and 1182–1191 (LNNSNVPSNT).

Belongs to the SPO71 family. As to quaternary structure, interacts (via PxP motif) with VPS13 (via SHR-BD domain); during prospore membrane formation.

The protein localises to the prospore membrane. Functionally, recruits the lipid transfer protein VPS13 to the prospore membrane during sporulation, thereby aiding prospore membrane formation. This is Prospore membrane adapter protein SPO71 (SPO71) from Saccharomyces cerevisiae (strain ATCC 204508 / S288c) (Baker's yeast).